A 924-amino-acid chain; its full sequence is DNA repair and recombination protein RDH54 (924 aa).

A compositionally biased stretch (basic and acidic residues) spans 1-10 (MQIPKYENKP). 2 disordered regions span residues 1 to 21 (MQIP…GSNK) and 155 to 183 (EALS…NDGG). Residues 168-178 (TTSTTETVPST) are compositionally biased toward low complexity. Residues 299-487 (LENDSDISGC…FTIIDFINPG (189 aa)) form the Helicase ATP-binding domain. 346 to 353 (IPLTGLCK) is an ATP binding site. The DEGH box signature appears at 472 to 475 (NDLN). A Glycyl lysine isopeptide (Lys-Gly) (interchain with G-Cter in ubiquitin) cross-link involves residue Lys615. Residues 631-790 (KLRVLMTLLE…DSEMRNKESS (160 aa)) enclose the Helicase C-terminal domain.

This sequence belongs to the SNF2/RAD54 helicase family. In terms of assembly, interacts with RAD51 and DMC1.

The protein resides in the nucleus. It carries out the reaction ATP + H2O = ADP + phosphate + H(+). Involved in the recombinational repair of double-strand breaks (DSB) in DNA during mitosis and meiosis. Has DNA dependent ATPase activity. Promotes D-loop (displacement loop) formation with RAD51 recombinase. Modifies the topology of double-stranded DNA during the D-loop reaction to facilitate the invasion of the homologous duplex molecule by the initiating single-stranded DNA substrate. Required for adaptation from G2/M checkpoint arrest induced by a double strand break, by participating in monitoring the extent of single-stranded DNA produced by resection of DNA ends. This role is distinct from its roles in recombination. Promotes colocalization of RAD51 and DMC1 during meiotic recombination. Involved in crossover interference. The chain is DNA repair and recombination protein RDH54 (RDH54) from Saccharomyces cerevisiae (strain YJM789) (Baker's yeast).